Reading from the N-terminus, the 462-residue chain is Receptor like protein 29 (462 aa).

An N-terminal signal peptide occupies residues 1-26 (MTMKRALPSPSSLLFFFLLITPLFLC). Topologically, residues 27-441 (QENRVSASMP…SQASRYYRSC (415 aa)) are extracellular. A glycan (N-linked (GlcNAc...) asparagine) is linked at N139. LRR repeat units lie at residues 139–164 (NSSL…ISSL), 165–188 (KSLQ…IFSL), 190–212 (SLVH…LGNL), 213–236 (NNLV…ISQL), 238–260 (MLQK…VEKL), 261–284 (RSLS…ISNL), 286–308 (SLQY…LGFL), 309–331 (PKLQ…SYTK), 332–355 (LTNL…GFES), and 357–381 (PHVF…SFLR). N-linked (GlcNAc...) asparagine glycosylation is found at N334, N363, and N416. Residues 442–462 (FFANALFPFALFLGLHQRWVL) traverse the membrane as a helical segment.

It belongs to the RLP family.

The protein localises to the cell membrane. This is Receptor like protein 29 from Arabidopsis thaliana (Mouse-ear cress).